Consider the following 165-residue polypeptide: Hydroxyproline-rich systemin A (165 aa).

An N-terminal signal peptide occupies residues 1–18; it reads MRVLFLIYLILSPFGAEA. A propeptide spanning residues 19-35 is cleaved from the precursor; that stretch reads RTLLENHEGLNVGSGYG. Disordered stretches follow at residues 33–70 and 142–165; these read GYGR…TSEN and YWNR…LHSY. Residues P42, P43, P45, P49, and P50 each carry the 4-hydroxyproline modification. O-linked (Ara...) hydroxyproline glycans are attached at residues P42, P43, P45, P49, and P50. Positions 54 to 143 are excised as a propeptide; sequence VSNSVSPTRT…FDSKSDERYW (90 aa). Residues P150, P151, and P153 each carry the 4-hydroxyproline modification. O-linked (Ara...) hydroxyproline glycans are attached at residues P150, P151, and P153. Positions 162–165 are excised as a propeptide; it reads LHSY.

In terms of processing, O-glycosylated; contains pentose side chains. As to expression, expressed in leaves.

It localises to the secreted. Activates a lipid-based signal transduction pathway in which linolenic acid is converted to jasmonic acid, a potent activator of defense gene transcription, including proteinase inhibitors. The polypeptide is Hydroxyproline-rich systemin A (Nicotiana tabacum (Common tobacco)).